The chain runs to 129 residues: Large ribosomal subunit protein uL22 (129 aa).

This sequence belongs to the universal ribosomal protein uL22 family. In terms of assembly, part of the 50S ribosomal subunit.

This protein binds specifically to 23S rRNA; its binding is stimulated by other ribosomal proteins, e.g. L4, L17, and L20. It is important during the early stages of 50S assembly. It makes multiple contacts with different domains of the 23S rRNA in the assembled 50S subunit and ribosome. In terms of biological role, the globular domain of the protein is located near the polypeptide exit tunnel on the outside of the subunit, while an extended beta-hairpin is found that lines the wall of the exit tunnel in the center of the 70S ribosome. This chain is Large ribosomal subunit protein uL22, found in Bartonella quintana (strain Toulouse) (Rochalimaea quintana).